The sequence spans 208 residues: Small ribosomal subunit protein uS4 (208 aa).

The S4 RNA-binding domain maps to 98–161 (RRLDNVVYRL…RKSKRFKEVF (64 aa)).

This sequence belongs to the universal ribosomal protein uS4 family. As to quaternary structure, part of the 30S ribosomal subunit. Contacts protein S5. The interaction surface between S4 and S5 is involved in control of translational fidelity.

One of the primary rRNA binding proteins, it binds directly to 16S rRNA where it nucleates assembly of the body of the 30S subunit. Functionally, with S5 and S12 plays an important role in translational accuracy. The protein is Small ribosomal subunit protein uS4 of Halothermothrix orenii (strain H 168 / OCM 544 / DSM 9562).